A 185-amino-acid polypeptide reads, in one-letter code: Pyruvate/ketoisovalerate oxidoreductases common subunit gamma (185 aa).

In terms of assembly, heterotetramer of one alpha, one beta, one delta and one gamma chain.

The enzyme catalyses 2 oxidized [2Fe-2S]-[ferredoxin] + pyruvate + CoA = 2 reduced [2Fe-2S]-[ferredoxin] + acetyl-CoA + CO2 + H(+). The catalysed reaction is 3-methyl-2-oxobutanoate + 2 oxidized [2Fe-2S]-[ferredoxin] + CoA = 2-methylpropanoyl-CoA + 2 reduced [2Fe-2S]-[ferredoxin] + CO2 + H(+). This Thermococcus litoralis (strain ATCC 51850 / DSM 5473 / JCM 8560 / NS-C) protein is Pyruvate/ketoisovalerate oxidoreductases common subunit gamma (porG).